A 283-amino-acid chain; its full sequence is Probable endonuclease 4 (283 aa).

Zn(2+) contacts are provided by H69, H113, E148, D182, H185, H217, D230, H232, and E262.

The protein belongs to the AP endonuclease 2 family. The cofactor is Zn(2+).

It catalyses the reaction Endonucleolytic cleavage to 5'-phosphooligonucleotide end-products.. Endonuclease IV plays a role in DNA repair. It cleaves phosphodiester bonds at apurinic or apyrimidinic (AP) sites, generating a 3'-hydroxyl group and a 5'-terminal sugar phosphate. The polypeptide is Probable endonuclease 4 (Bifidobacterium longum (strain NCC 2705)).